A 473-amino-acid chain; its full sequence is Vasculin (473 aa).

3 disordered regions span residues 1 to 25 (MAQHDFAPAWLNFPTPPSSTKSSLN), 46 to 149 (RHNS…REPN), and 191 to 342 (VGNL…QERD). S49 bears the Phosphoserine mark. The residue at position 87 (R87) is an Omega-N-methylarginine. The span at 119 to 133 (ETGRKEDKRERKQFE) shows a compositional bias: basic and acidic residues. Polar residues-rich tracts occupy residues 194–204 (LPSQPVKNGTG) and 251–286 (AFKSTAKNFSPSTNSVKECNRSNSSSPVDKLNQQPR). Phosphoserine is present on residues S274, S276, S322, and S381. Residues 293–329 (MRTDKKSEFLKALKRDRVEEEHEDESRAGSEKDDDSF) show a composition bias toward basic and acidic residues. The tract at residues 444 to 473 (GPWKNSTFKPTTENDDTETSSSDTSDDDDV) is disordered. The span at 456-473 (ENDDTETSSSDTSDDDDV) shows a compositional bias: acidic residues.

Belongs to the vasculin family. In terms of assembly, interacts with GTF2B, GTF2F2, RNA polymerase II and TBP. In terms of tissue distribution, widely expressed. Some isoforms may be specifically expressed in veins and arteries (at protein level). Isoform 4 is widely expressed. Isoform 1, isoform 2 and isoform 3 may be specifically expressed in vascular smooth muscle cells.

It is found in the nucleus. Its subcellular location is the cytoplasm. In terms of biological role, functions as a GC-rich promoter-specific transactivating transcription factor. This chain is Vasculin (GPBP1), found in Homo sapiens (Human).